The sequence spans 142 residues: Small ribosomal subunit protein uS19 (142 aa).

Ser2 carries the post-translational modification N-acetylserine. Residues Lys24, Lys35, and Lys64 each participate in a glycyl lysine isopeptide (Lys-Gly) (interchain with G-Cter in ubiquitin) cross-link.

Belongs to the universal ribosomal protein uS19 family. Component of the small ribosomal subunit (SSU). Mature yeast ribosomes consist of a small (40S) and a large (60S) subunit. The 40S small subunit contains 1 molecule of ribosomal RNA (18S rRNA) and 33 different proteins (encoded by 57 genes). The large 60S subunit contains 3 rRNA molecules (25S, 5.8S and 5S rRNA) and 46 different proteins (encoded by 81 genes).

The protein localises to the cytoplasm. Its function is as follows. Component of the ribosome, a large ribonucleoprotein complex responsible for the synthesis of proteins in the cell. The small ribosomal subunit (SSU) binds messenger RNAs (mRNAs) and translates the encoded message by selecting cognate aminoacyl-transfer RNA (tRNA) molecules. The large subunit (LSU) contains the ribosomal catalytic site termed the peptidyl transferase center (PTC), which catalyzes the formation of peptide bonds, thereby polymerizing the amino acids delivered by tRNAs into a polypeptide chain. The nascent polypeptides leave the ribosome through a tunnel in the LSU and interact with protein factors that function in enzymatic processing, targeting, and the membrane insertion of nascent chains at the exit of the ribosomal tunnel. uS19 is involved in the nuclear export of the small ribosomal subunit precursor. Has a role in the late stage of the assembly of pre-40S particles within the nucleus and controls their export to the cytoplasm. The sequence is that of Small ribosomal subunit protein uS19 from Saccharomyces cerevisiae (strain ATCC 204508 / S288c) (Baker's yeast).